A 351-amino-acid polypeptide reads, in one-letter code: Type II methyltransferase M.DsaV (351 aa).

In terms of domain architecture, SAM-dependent MTase C5-type spans 6–312; sequence LKFIDLFAGI…QKMLSYIDLT (307 aa). Cysteine 75 is a catalytic residue.

It belongs to the class I-like SAM-binding methyltransferase superfamily. C5-methyltransferase family.

The catalysed reaction is a 2'-deoxycytidine in DNA + S-adenosyl-L-methionine = a 5-methyl-2'-deoxycytidine in DNA + S-adenosyl-L-homocysteine + H(+). A methylase, recognizes the double-stranded sequence 5'-CCNGG-3', methylates C-2 on both strands, and protects the DNA from cleavage by the DsaV endonuclease. This is Type II methyltransferase M.DsaV from Dactylococcopsis salina (Myxobaktron salinum).